We begin with the raw amino-acid sequence, 65 residues long: uncharacterized protein (65 aa).

A signal peptide spans 1–22 (MKFIKLFTFLVYLFVTLTNVFA).

This is an uncharacterized protein from Invertebrate iridescent virus 6 (IIV-6).